We begin with the raw amino-acid sequence, 254 residues long: DNA repair protein RecO (254 aa).

This sequence belongs to the RecO family.

Functionally, involved in DNA repair and RecF pathway recombination. The chain is DNA repair protein RecO from Anaeromyxobacter dehalogenans (strain 2CP-1 / ATCC BAA-258).